Reading from the N-terminus, the 385-residue chain is Cytochrome b (385 aa).

The next 4 helical transmembrane spans lie at 32–52, 76–98, 113–133, and 179–199; these read FGSL…TLAM, WFIR…AHMG, PWSI…MGYV, and FFAL…LHLI. H82 and H96 together coordinate heme b. Residues H183 and H197 each coordinate heme b. H202 lines the a ubiquinone pocket. 4 consecutive transmembrane segments (helical) span residues 225-245, 289-309, 321-341, and 348-368; these read YSFK…LFVF, LGGV…PIVD, ISKL…VLGQ, and FIVL…ILLP.

It belongs to the cytochrome b family. In terms of assembly, fungal cytochrome b-c1 complex contains 10 subunits; 3 respiratory subunits, 2 core proteins and 5 low-molecular weight proteins. Cytochrome b-c1 complex is a homodimer. It depends on heme b as a cofactor.

It localises to the mitochondrion inner membrane. In terms of biological role, component of the ubiquinol-cytochrome c reductase complex (complex III or cytochrome b-c1 complex) that is part of the mitochondrial respiratory chain. The b-c1 complex mediates electron transfer from ubiquinol to cytochrome c. Contributes to the generation of a proton gradient across the mitochondrial membrane that is then used for ATP synthesis. The protein is Cytochrome b (COB) of Yarrowia lipolytica (strain CLIB 122 / E 150) (Yeast).